A 435-amino-acid chain; its full sequence is Xylose isomerase (435 aa).

Catalysis depends on residues histidine 100 and aspartate 103. Mg(2+)-binding residues include glutamate 231, glutamate 267, histidine 270, aspartate 295, aspartate 306, aspartate 308, and aspartate 338.

Belongs to the xylose isomerase family. Homotetramer. Mg(2+) is required as a cofactor.

It localises to the cytoplasm. The enzyme catalyses alpha-D-xylose = alpha-D-xylulofuranose. This chain is Xylose isomerase, found in Brucella anthropi (strain ATCC 49188 / DSM 6882 / CCUG 24695 / JCM 21032 / LMG 3331 / NBRC 15819 / NCTC 12168 / Alc 37) (Ochrobactrum anthropi).